The chain runs to 49 residues: Large ribosomal subunit protein bL33 (49 aa).

The protein belongs to the bacterial ribosomal protein bL33 family.

This is Large ribosomal subunit protein bL33 from Leuconostoc citreum (strain KM20).